A 510-amino-acid chain; its full sequence is Laccase (510 aa).

Plastocyanin-like domains lie at 45-79, 99-174, 242-317, and 372-506; these read PTKL…LPLK, KTVV…LISD, YLEV…IVLK, and LTLT…MRPM. Cu cation contacts are provided by His103, His105, His151, and His153. Cu cation contacts are provided by His419, His422, His424, His491, Cys492, His493, His497, and Met502.

This sequence belongs to the multicopper oxidase family. Requires Cu(2+) as cofactor.

It catalyses the reaction 4 hydroquinone + O2 = 4 benzosemiquinone + 2 H2O. With respect to regulation, resistant to alkali and organic solvents such as methanol, ethanol and acetone. Resistant to EDTA, which might be explained by the spatial protection of copper ions in the active sites. Inhibited by DMSO. Strongly inhibited by Fe(2+) and DTT. In terms of biological role, multicopper oxidase that catalyzes the oxidation of a variety of substrates, including phenolic and non-phenolic compounds. Substrates include 2,6-dimethoxyphenol (2,6-DMP) and the non-phenolic compound 2,2'-azino-bis(3-ethylbenzothiazoline-6-sulfonic acid) (ABTS). Cannot use guaiacol and catechol. The chain is Laccase from Bacillus stratosphericus.